The chain runs to 441 residues: MQVSVETTSPIERVLTISVPAARVDEKVNSEVAKTAKTIRIDGFRKGKVPVSVVKKRYGQGIRLDAVEQIMRDAYVEAIQKESIQPAGMPSIEPKNFAEGADLEFVVKIEVYPEVTLADNSAIKVDRVVSDVTEADVDTMLETLRKQNAEWSAVERESADGDQVTIDFVGYLGDEAFDGGAAEGHKLVLGSNTMIPGFESGILGAKAGEERTISVTFPEDYQAENLKGKEATFKITVSEVAEQILPELNDAFVEKFGLEEATVAALRAEVRKNMERELNQAIKSKLKNALFEGLSSINEVEVPSALVDQEVDALRKQAAQQFGGQGFDASQLPAELFQEEAKKRAKLGLLISEVIKKDDLKVDDDRVRAFLEDMAQAYQEPQQVIDFYLKNKEQLAQVQSAVLEEQVVDKLLESAQVTEVTLGYEDAIKPNAQAEEAGEEA.

Positions 161 to 246 (GDQVTIDFVG…VSEVAEQILP (86 aa)) constitute a PPIase FKBP-type domain.

Belongs to the FKBP-type PPIase family. Tig subfamily.

The protein localises to the cytoplasm. It carries out the reaction [protein]-peptidylproline (omega=180) = [protein]-peptidylproline (omega=0). In terms of biological role, involved in protein export. Acts as a chaperone by maintaining the newly synthesized protein in an open conformation. Functions as a peptidyl-prolyl cis-trans isomerase. This Marinomonas sp. (strain MWYL1) protein is Trigger factor.